Consider the following 402-residue polypeptide: Putative F-box protein At4g22180 (402 aa).

Residues 18–64 (PNSWSELPLDLLTAVFERLSYANFQRAKSVCSSWHSGSRQSVPIQIP) form the F-box domain.

This is Putative F-box protein At4g22180 from Arabidopsis thaliana (Mouse-ear cress).